The following is a 259-amino-acid chain: Snake venom serine protease homolog rhinocerase 2 (259 aa).

An N-terminal signal peptide occupies residues 1–17 (VLIRVLANLLLLQLSYA). Residues 18-23 (QESSEL) constitute a propeptide that is removed on maturation. The Peptidase S1 domain occupies 24-250 (VIGGDECDIN…YTDWIEGIIA (227 aa)). Intrachain disulfides connect cysteine 30–cysteine 164, cysteine 51–cysteine 67, cysteine 99–cysteine 257, cysteine 143–cysteine 211, cysteine 175–cysteine 190, and cysteine 201–cysteine 226. Asparagine 252 is a glycosylation site (N-linked (GlcNAc...) asparagine).

This sequence belongs to the peptidase S1 family. Snake venom subfamily. In terms of tissue distribution, expressed by the venom gland.

The protein localises to the secreted. Snake venom serine protease homolog that may act in the hemostasis system of the prey. This Bitis rhinoceros (West African gaboon viper) protein is Snake venom serine protease homolog rhinocerase 2.